The following is a 96-amino-acid chain: Protein Vpr (96 aa).

The segment at 1 to 42 (MEQAPEDQGPQREPYNEWTLDLLEELKNEAVRHFPRPWLHSL) is homooligomerization. Residues Ser-79, Ser-94, and Ser-96 each carry the phosphoserine; by host modification.

The protein belongs to the HIV-1 VPR protein family. In terms of assembly, homooligomer, may form homodimer. Interacts with p6-gag region of the Pr55 Gag precursor protein through a (Leu-X-X)4 motif near the C-terminus of the P6gag protein. Interacts with host UNG. May interact with host RAD23A/HHR23A. Interacts with host VPRBP/DCAF1, leading to hijack the CUL4A-RBX1-DDB1-DCAF1/VPRBP complex, mediating ubiquitination of host proteins such as TERT and ZGPAT and arrest of the cell cycle in G2 phase. Phosphorylated on several residues by host. These phosphorylations regulate VPR activity for the nuclear import of the HIV-1 pre-integration complex.

Its subcellular location is the virion. The protein localises to the host nucleus. The protein resides in the host extracellular space. During virus replication, may deplete host UNG protein, and incude G2-M cell cycle arrest. Acts by targeting specific host proteins for degradation by the 26S proteasome, through association with the cellular CUL4A-DDB1 E3 ligase complex by direct interaction with host VPRPB/DCAF-1. Cell cycle arrest reportedly occurs within hours of infection and is not blocked by antiviral agents, suggesting that it is initiated by the VPR carried into the virion. Additionally, VPR induces apoptosis in a cell cycle dependent manner suggesting that these two effects are mechanistically linked. Detected in the serum and cerebrospinal fluid of AIDS patient, VPR may also induce cell death to bystander cells. Its function is as follows. During virus entry, plays a role in the transport of the viral pre-integration (PIC) complex to the host nucleus. This function is crucial for viral infection of non-dividing macrophages. May act directly at the nuclear pore complex, by binding nucleoporins phenylalanine-glycine (FG)-repeat regions. In Human immunodeficiency virus type 1 group M subtype F1 (isolate 93BR020) (HIV-1), this protein is Protein Vpr.